Here is a 283-residue protein sequence, read N- to C-terminus: Bifunctional protein FolD 2 (283 aa).

NADP(+) is bound by residues 165 to 167 (GAS), S190, and I231.

Belongs to the tetrahydrofolate dehydrogenase/cyclohydrolase family. In terms of assembly, homodimer.

It carries out the reaction (6R)-5,10-methylene-5,6,7,8-tetrahydrofolate + NADP(+) = (6R)-5,10-methenyltetrahydrofolate + NADPH. The enzyme catalyses (6R)-5,10-methenyltetrahydrofolate + H2O = (6R)-10-formyltetrahydrofolate + H(+). Its pathway is one-carbon metabolism; tetrahydrofolate interconversion. Catalyzes the oxidation of 5,10-methylenetetrahydrofolate to 5,10-methenyltetrahydrofolate and then the hydrolysis of 5,10-methenyltetrahydrofolate to 10-formyltetrahydrofolate. In Bordetella pertussis (strain Tohama I / ATCC BAA-589 / NCTC 13251), this protein is Bifunctional protein FolD 2.